Consider the following 24-residue polypeptide: Coenzyme PQQ synthesis protein A (24 aa).

The pyrroloquinoline quinone (Glu-Tyr) cross-link spans 16–20; sequence EVTMY.

It belongs to the PqqA family.

It functions in the pathway cofactor biosynthesis; pyrroloquinoline quinone biosynthesis. In terms of biological role, required for coenzyme pyrroloquinoline quinone (PQQ) biosynthesis. PQQ is probably formed by cross-linking a specific glutamate to a specific tyrosine residue and excising these residues from the peptide. The sequence is that of Coenzyme PQQ synthesis protein A from Pseudomonas fluorescens (strain Pf0-1).